The sequence spans 819 residues: Leucine--tRNA ligase (819 aa).

The 'HIGH' region signature appears at P42–H52. The 'KMSKS' region motif lies at K576 to S580. K579 is an ATP binding site.

This sequence belongs to the class-I aminoacyl-tRNA synthetase family.

Its subcellular location is the cytoplasm. It catalyses the reaction tRNA(Leu) + L-leucine + ATP = L-leucyl-tRNA(Leu) + AMP + diphosphate. The polypeptide is Leucine--tRNA ligase (Nitrosococcus oceani (strain ATCC 19707 / BCRC 17464 / JCM 30415 / NCIMB 11848 / C-107)).